Consider the following 123-residue polypeptide: Protein Wnt-3a (123 aa).

The O-palmitoleoyl serine moiety is linked to residue serine 1. Cysteine 89 and cysteine 104 form a disulfide bridge. N-linked (GlcNAc...) asparagine glycosylation occurs at asparagine 90.

This sequence belongs to the Wnt family. Post-translationally, disulfide bonds have critical and distinct roles in secretion and activity. Loss of each conserved cysteine results in high molecular weight oxidized Wnt oligomers, which are formed through inter-Wnt disulfide bonding. In terms of processing, palmitoleoylation is required for efficient binding to frizzled receptors. Depalmitoleoylation leads to Wnt signaling pathway inhibition.

The protein localises to the secreted. Its subcellular location is the extracellular space. It is found in the extracellular matrix. Ligand for members of the frizzled family of seven transmembrane receptors. Functions in the canonical Wnt signaling pathway that results in activation of transcription factors of the TCF/LEF family. Required for normal embryonic mesoderm development and formation of caudal somites. Required for normal morphogenesis of the developing neural tube. The chain is Protein Wnt-3a (WNT-3A) from Plethodon jordani (Red-cheeked salamander).